Here is a 266-residue protein sequence, read N- to C-terminus: Small ribosomal subunit protein uS3 (266 aa).

The KH type-2 domain occupies 39–107; it reads VREYLKKKLK…PVHVNIEEIR (69 aa). The tract at residues 218 to 266 is disordered; that stretch reads EVAEDKRPRRNARPGDRRPRRDGEGGAPGARRGAPRRGAGKPEDGKTGE. Basic and acidic residues-rich tracts occupy residues 230–241 and 257–266; these read RPGDRRPRRDGE and GKPEDGKTGE.

It belongs to the universal ribosomal protein uS3 family. In terms of assembly, part of the 30S ribosomal subunit. Forms a tight complex with proteins S10 and S14.

Its function is as follows. Binds the lower part of the 30S subunit head. Binds mRNA in the 70S ribosome, positioning it for translation. In Burkholderia multivorans (strain ATCC 17616 / 249), this protein is Small ribosomal subunit protein uS3.